Reading from the N-terminus, the 402-residue chain is MTYQQPDAKGFYGKFGGQFVPETLMTAVIELDKAYREAKEDSSFQAELDDLLKNYVGRETPLYHAKRLTDHIGGAQIYLKREDLNHTGAHKINNALGQVLLAKRMGKKKIIAETGAGQHGVATATAAALFDMDCTIYVGEEDVKRQALNVFRMELLGAKVFSVTDGSRVLKDAVNAALRAWVAGIEDTHYIMGSALGPAPFPEIVRDFQSVIGREAKRQYAEISGGKLPDAVMACIGGGSNAIGMFYPFVNDKSVAMYGAEASGLGLDTEKHAATFAKGRPGILHGALMDVLQDAHGQIMEAFSISAGLDYPGVGPEHCYFNEIGRATYDSITDEEALEGFKLLSRLEGIIPALESSHAIALAQKVAAKMSPDQSLIVCLSGRGDKDVMQVKERFEAEAEGK.

At K91 the chain carries N6-(pyridoxal phosphate)lysine.

Belongs to the TrpB family. In terms of assembly, tetramer of two alpha and two beta chains. The cofactor is pyridoxal 5'-phosphate.

The catalysed reaction is (1S,2R)-1-C-(indol-3-yl)glycerol 3-phosphate + L-serine = D-glyceraldehyde 3-phosphate + L-tryptophan + H2O. Its pathway is amino-acid biosynthesis; L-tryptophan biosynthesis; L-tryptophan from chorismate: step 5/5. The beta subunit is responsible for the synthesis of L-tryptophan from indole and L-serine. The polypeptide is Tryptophan synthase beta chain (Streptococcus thermophilus (strain ATCC BAA-250 / LMG 18311)).